The chain runs to 192 residues: Intraflagellar transport protein 22 (192 aa).

GTP contacts are provided by residues 12-19 (GPQRTGKT) and 62-69 (WDVSGSVQ).

Belongs to the small GTPase superfamily. Rab family. In terms of assembly, component of the IFT complex B, composed of IFT88, IFT70, IFT52, IFT46, IFT27, IFT25 and IFT22.

The protein localises to the cell projection. It localises to the cilium. The protein resides in the flagellum. Component of the intraflagellar transport (IFT) complex B. Functions in regulating the cellular pool size of both complex A and complex B and thus plays a critical role in determining the cellular availability of IFT particles. This chain is Intraflagellar transport protein 22 (FAP9), found in Chlamydomonas reinhardtii (Chlamydomonas smithii).